Consider the following 532-residue polypeptide: MELSYATTLHHRDVVFYVTADRNRAYFVCGGSVYSVGRPRDSQPGEIAKFGLVVRGTGPKDRMVANYVRSELRQRGLRDVRPVGEDEVFLDSVCLLNPNVSSERDVINTNDVEVLDECLAEYCTSLRTSPGVLVTGVRVRARDRVIELFEHPAIVNISSRFAYTPSPYVFALAQAHLPRLPSSLEPLVSGLFDGIPAPRQPLDARDRRTDVVITGTRAPRPMAGTGAGGAGAKRATVSEFVQVKHIDRVVSPSVSSAPPPSAPDASLPPPGLQEAAPPGPPLRELWWVFYAGDRALEEPHAESGLTREEVRAVHGFREQAWKLFGSVGAPRAFLGAALALSPTQKLAVYYYLIHRERRMSPFPALVRLVGRYIQRHGLYVPAPDEPTLADAMNGLFRDALAAGTVAEQLLMFDLLPPKDVPVGSDARADSAALLRFVDSQRLTPGGSVSPEHVMYLGAFLGVLYAGHGRLAAATHTARLTGVTSLVLTVGDVDRMSAFDRGPAGAAGRTRTAGYLDALLTVCLARAQHGQSV.

Residues 251–276 (SPSVSSAPPPSAPDASLPPPGLQEAA) are disordered. Over residues 257-276 (APPPSAPDASLPPPGLQEAA) the composition is skewed to pro residues.

It belongs to the alphaherpesvirinae UL21 protein family. As to quaternary structure, interacts (via C-terminus) with UL16.

The protein resides in the virion tegument. Its subcellular location is the host cytoplasm. It is found in the host nucleus. Its function is as follows. May participate in DNA packaging/capsid maturation events. Promotes efficient incorporation of tegument proteins UL46, UL49, and US3 into virions. May also play a role in capsid transport to the trans-Golgi network (TGN). The protein is Tegument protein UL21 of Human herpesvirus 2 (strain HG52) (HHV-2).